Consider the following 600-residue polypeptide: Estrogen receptor (600 aa).

The segment at M1 to Y189 is modulating (transactivation AF-1); mediates interaction with MACROD1. S10 carries O-linked (GlcNAc) serine glycosylation. The required for interaction with NCOA1 stretch occupies residues M35–S47. An interaction with DDX5; self-association region spans residues M35 to M179. A phosphoserine; by CDK2 mark is found at S109 and S111. S123 is modified (phosphoserine). Residues D148 to G177 are disordered. Residues S159–L170 show a composition bias toward basic and acidic residues. S172 bears the Phosphoserine; by CK2 mark. 2 consecutive NR C4-type zinc fingers follow at residues C190–C210 and C226–C250. Residues C190–M255 constitute a DNA-binding region (nuclear receptor). Residues C190 to L315 form a mediates interaction with DNTTIP2 region. Residues M256–L315 form a hinge region. R265 is subject to Asymmetric dimethylarginine; by PRMT1. The interval G267–I600 is interaction with AKAP13. The segment at M269–I600 is self-association. Residues T316–H552 form the NR LBD domain. Residues T316–I600 are transactivation AF-2. Positions 358 and 399 each coordinate 17beta-estradiol. C452 carries the S-palmitoyl cysteine lipid modification. H529 contributes to the 17beta-estradiol binding site. A Phosphotyrosine; by Tyr-kinases modification is found at Y542. The interval A558–A581 is disordered. Over residues S569 to A581 the composition is skewed to low complexity. A glycan (O-linked (GlcNAc) threonine) is linked at T576.

This sequence belongs to the nuclear hormone receptor family. NR3 subfamily. As to quaternary structure, interacts with BCAS3. Binds DNA as a homodimer. Can form a heterodimer with ESR2. Interacts with coactivator NCOA5. Interacts with PELP1, the interaction is enhanced by 17-beta-estradiol; the interaction increases ESR1 transcriptional activity. Interacts with NCOA7; the interaction is ligand-inducible. Interacts with AKAP13, CUEDC2, HEXIM1, KDM5A, MAP1S, SMARD1, and UBE1C. Interacts with MUC1; the interaction is stimulated by 7 beta-estradiol (E2) and enhances ESR1-mediated transcription. Interacts with DNTTIP2, and UIMC1. Interacts with KMT2D/MLL2. Interacts with ATAD2; the interaction is enhanced by estradiol. Interacts with KIF18A and LDB1. Interacts with RLIM (via its C-terminus). Interacts with MACROD1. Interacts with SH2D4A and PLCG. Interacts with SH2D4A; the interaction blocks binding to PLCG and inhibits estrogen-induced cell proliferation. Interacts with DYNLL1. Interacts with CCDC62; the interaction requires estradiol and appears to enhance the transcription of target genes. Interacts with NR2C1; the interaction prevents homodimerization of ESR1 and suppresses its transcriptional activity and cell growth. Interacts with DNAAF4. Interacts with PRMT2. Interacts with RBFOX2. Interacts with EP300; the interaction is estrogen-dependent and enhanced by CITED1. Interacts with CITED1; the interaction is estrogen-dependent. Interacts with FAM120B, FOXL2, PHB2 and SLC30A9. Interacts with coactivators NCOA3 and NCOA6. Interacts with STK3/MST2 only in the presence of SAV1 and vice-versa. Binds to CSNK1D. Interacts with NCOA2; NCOA2 can interact with ESR1 AF-1 and AF-2 domains simultaneously and mediate their transcriptional synergy. Interacts with DDX5. Interacts with NCOA1; the interaction seems to require a self-association of N-terminal and C-terminal regions. Interacts with ZNF366, DDX17, NFKB1, RELA, SP1 and SP3. Interacts with NRIP1. Interacts with GPER1; the interaction occurs in an estrogen-dependent manner. Interacts with TRIP4 (ufmylated); estrogen dependent. Interacts with LMTK3; the interaction phosphorylates ESR1 (in vitro) and protects it against proteasomal degradation. Interacts with CCAR2 (via N-terminus) in a ligand-independent manner. Interacts with ZFHX3. Interacts with SFR1 in a ligand-dependent and -independent manner. Interacts with DCAF13, LATS1 and DCAF1; regulates ESR1 ubiquitination and ubiquitin-mediated proteasomal degradation. Interacts (via DNA-binding domain) with POU4F2 (C-terminus); this interaction increases the estrogen receptor ESR1 transcriptional activity in a DNA- and ligand 17-beta-estradiol-independent manner. Interacts with ESRRB isoform 1. Interacts with UBE3A and WBP2. Interacts with GTF2B. Interacts with RBM39. In the absence of hormonal ligand, interacts with TACC1. Interacts with PI3KR1 or PI3KR2 and PTK2/FAK1. Interacts with SRC. Interacts with BAG1; the interaction is promoted in the absence of estradiol (17-beta-estradiol/E2). Interacts with and ubiquitinated by STUB1; the interaction is promoted in the absence of estradiol (17-beta-estradiol/E2). Interacts with NEDD8. In terms of processing, phosphorylated by cyclin A/CDK2 and CK1. Phosphorylation probably enhances transcriptional activity. Dephosphorylation at Ser-123 by PPP5C inhibits its transactivation activity. Phosphorylated by LMTK3 (in vitro). Ubiquitinated; regulated by LATS1 via DCAF1 it leads to ESR1 proteasomal degradation. Deubiquitinated by OTUB1. Ubiquitinated by STUB1/CHIP; in the CA1 hippocampal region following loss of endogenous circulating estradiol (17-beta-estradiol/E2). Ubiquitinated by UBR5, leading to its degradation: UBR5 specifically recognizes and binds ligand-bound ESR1 when it is not associated with coactivators (NCOAs). In presence of NCOAs, the UBR5-degron is not accessible, preventing its ubiquitination and degradation. Post-translationally, palmitoylated at Cys-452 by ZDHHC7 and ZDHHC21. This modification is required for plasma membrane targeting and for rapid intracellular signaling via ERK and AKT kinases and cAMP generation, but not for signaling mediated by the nuclear hormone receptor. In terms of processing, dimethylated by PRMT1 at Arg-265. The methylation may favor cytoplasmic localization. Demethylated by JMJD6 at Arg-265. As to expression, expressed in the CA1 region of the hippocampus, expression decreases with age (at protein level). Expressed in the uterus (at protein level).

It localises to the nucleus. The protein resides in the cytoplasm. The protein localises to the golgi apparatus. Its subcellular location is the cell membrane. Nuclear hormone receptor. The steroid hormones and their receptors are involved in the regulation of eukaryotic gene expression and affect cellular proliferation and differentiation in target tissues. Ligand-dependent nuclear transactivation involves either direct homodimer binding to a palindromic estrogen response element (ERE) sequence or association with other DNA-binding transcription factors, such as AP-1/c-Jun, c-Fos, ATF-2, Sp1 and Sp3, to mediate ERE-independent signaling. Ligand binding induces a conformational change allowing subsequent or combinatorial association with multiprotein coactivator complexes through LXXLL motifs of their respective components. Mutual transrepression occurs between the estrogen receptor (ER) and NF-kappa-B in a cell-type specific manner. Decreases NF-kappa-B DNA-binding activity and inhibits NF-kappa-B-mediated transcription from the IL6 promoter and displace RELA/p65 and associated coregulators from the promoter. Recruited to the NF-kappa-B response element of the CCL2 and IL8 promoters and can displace CREBBP. Present with NF-kappa-B components RELA/p65 and NFKB1/p50 on ERE sequences. Can also act synergistically with NF-kappa-B to activate transcription involving respective recruitment adjacent response elements; the function involves CREBBP. Can activate the transcriptional activity of TFF1. Also mediates membrane-initiated estrogen signaling involving various kinase cascades. Essential for MTA1-mediated transcriptional regulation of BRCA1 and BCAS3. Maintains neuronal survival in response to ischemic reperfusion injury when in the presence of circulating estradiol (17-beta-estradiol/E2). The sequence is that of Estrogen receptor (Esr1) from Rattus norvegicus (Rat).